Here is a 222-residue protein sequence, read N- to C-terminus: Vespryn (222 aa).

A signal peptide spans 1 to 44 (MSPSAGLQFSLYFLQTKKVLWKLTDKEKGLCYILLFTLCFFADQ). Positions 45 to 52 (ENGGKALA) are excised as a propeptide. One can recognise a B30.2/SPRY domain in the interval 53 to 159 (SPPGIWKRAD…RIWQMGLWWL (107 aa)). The propeptide occupies 160–222 (RHLETDPGRV…LGGTVSLTTL (63 aa)). N-linked (GlcNAc...) asparagine glycosylation is present at N195.

Belongs to the ohanin/vespryn family. As to expression, expressed by the venom gland.

It localises to the secreted. Its function is as follows. Neurotoxin that produces dose-dependent hypolocomotion and hyperalgesia in mice. May directly act on the central nervous system, as it is 6500-fold more potent when administered intracerebroventricularly than intraperitoneal. In Crotalus adamanteus (Eastern diamondback rattlesnake), this protein is Vespryn.